Here is a 290-residue protein sequence, read N- to C-terminus: Picrinine-N-methytransferase (290 aa).

The SAM motif I stretch occupies residues 71-80; it reads MLDVGCGIGG. Residues 133 to 139 carry the Vacuolar targeting signal motif; the sequence is DGTFDLV. The SAM motif II stretch occupies residues 134–142; it reads GTFDLVFTI. Residues 161–170 are SAM motif III; it reads VAAPGAPIVI.

The protein belongs to the class I-like SAM-binding methyltransferase superfamily. gTMT family. Homodimer. Accumulates in tissues actively synthesizing monoterpenoid indole alkaloids (MIAs) (at protein level). Mainly expressed in young leaves and, to a lower extent, in roots and stems.

It localises to the vacuole membrane. It carries out the reaction picrinine + S-adenosyl-L-methionine = ervincine + S-adenosyl-L-homocysteine + H(+). It functions in the pathway alkaloid biosynthesis; vindoline biosynthesis. S-adenosyl-L-methionine-dependent N-methyltransferase involved in the biosynthesis of biologically active monoterpenoid indole alkaloids (MIAs) natural products including vindoline. Catalyzes the conversion of picrinine to N-methylpicrinine (ervincine). Also accepts, with low efficiency, 21-hydroxycyclolochnericine and norajmaline as substrates. The polypeptide is Picrinine-N-methytransferase (Rauvolfia serpentina (Serpentine wood)).